The primary structure comprises 547 residues: Sesterfisheric acid synthase (547 aa).

A helical membrane pass occupies residues 19-39 (IMGCSLGTGLLVSMIIYNYFF). N-linked (GlcNAc...) asparagine glycosylation is found at N341 and N404. C490 contacts heme.

Belongs to the cytochrome P450 family. Heme is required as a cofactor.

It is found in the membrane. The enzyme catalyses sesterfisherol + 3 reduced [NADPH--hemoprotein reductase] + 3 O2 = sesterfisherate + 3 oxidized [NADPH--hemoprotein reductase] + 4 H2O + 4 H(+). The protein operates within secondary metabolite biosynthesis; terpenoid biosynthesis. Cytochrome P450 monooxygenase; part of the gene cluster that mediates the biosynthesis of sesterfisheric acid. The bifunctional terpene synthase NfSS converts DMAPP and IPP, and also GGPP, into sesterfisherol. The C-terminal prenyltransferase (PT) domain of NfSS catalyzes formation of GFPP, whereas the N-terminal terpene cyclase (TC) domain catalyzes the cyclization of GFPP to sesterfisherol. The cytochrome P450 monooxygenase NfP450 then catalyzes oxidative modifications of sesterfisherol into sesterfisheric acid. This chain is Sesterfisheric acid synthase, found in Neosartorya fischeri (strain ATCC 1020 / DSM 3700 / CBS 544.65 / FGSC A1164 / JCM 1740 / NRRL 181 / WB 181) (Aspergillus fischerianus).